A 350-amino-acid polypeptide reads, in one-letter code: Pro-cathepsin H (350 aa).

The first 19 residues, 1–19 (MAQWTLLIVFFCVATAAAG), serve as a signal peptide directing secretion. The propeptide at 20–113 (LSFHDSNPIR…WEEFRSHRLG (94 aa)) is activation peptide. An N-linked (GlcNAc...) asparagine glycan is attached at Asn-117. Positions 122–132 (LKGNHRITDVV) are cleaved as a propeptide — removed in mature form. 2 disulfides stabilise this stretch: Cys-154–Cys-197 and Cys-188–Cys-230. Cys-157 is an active-site residue. Residue Asn-177 is glycosylated (N-linked (GlcNAc...) asparagine). Residue Asn-246 is glycosylated (N-linked (GlcNAc...) asparagine). A disulfide bridge links Cys-288 with Cys-338. Residues His-297 and Asn-317 contribute to the active site.

Belongs to the peptidase C1 family. Interacts with KPI104 and KPI106. Composed of a mini chain and a large chain. The large chain may be split into heavy and light chain. All chains are held together by disulfide bonds.

Its subcellular location is the vacuole. The protein resides in the lysosome. The catalysed reaction is Hydrolysis of proteins, acting as an aminopeptidase (notably, cleaving Arg-|-Xaa bonds) as well as an endopeptidase.. Its function is as follows. May play a role in proteolysis leading to mobilization of nitrogen during senescence and starvation. The polypeptide is Pro-cathepsin H (Medicago truncatula (Barrel medic)).